Consider the following 201-residue polypeptide: Keratin-associated protein 4-12 (201 aa).

Tandem repeats lie at residues 5–9 (CCGSV), 20–24 (CCRPS), 25–29 (CCQTT), 30–34 (CCRTT), 35–39 (CCRPS), 40–44 (CCVSS), 45–49 (CCRPQ), 50–54 (CCQSV), 55–59 (CCQPT), 60–64 (CCRPS), 65–69 (CCQTT), 70–74 (CCRTT), 75–79 (CCRPS), 80–84 (CCVSS), 85–89 (CCRPQ), 90–94 (CCQSV), 95–99 (CCQPT), 100–104 (CCRPS), 105–109 (CCQTT), 110–114 (CCRTT), 115–119 (CCRPS), 120–124 (CCVSS), 125–129 (CCRPQ), 130–134 (CCQSV), 135–139 (CCQPT), 140–144 (CCRPS), 145–149 (CCISS), 155–159 (CCESS), 160–164 (CCRPC), and 165–169 (CCLRP). The tract at residues 5–169 (CCGSVCSDQG…CCRPCCCLRP (165 aa)) is 31 X 5 AA repeats of C-C-[GRQVIL]-[SPTR]-[VSTQPC].

The protein belongs to the KRTAP type 4 family. In terms of assembly, interacts with hair keratins. As to expression, expressed in the hair follicles.

In the hair cortex, hair keratin intermediate filaments are embedded in an interfilamentous matrix, consisting of hair keratin-associated proteins (KRTAP), which are essential for the formation of a rigid and resistant hair shaft through their extensive disulfide bond cross-linking with abundant cysteine residues of hair keratins. The matrix proteins include the high-sulfur and high-glycine-tyrosine keratins. This is Keratin-associated protein 4-12 (KRTAP4-12) from Homo sapiens (Human).